We begin with the raw amino-acid sequence, 333 residues long: MAELTEVRAADLAALEFFTGCRPSALEPLATQLRPLKAEPGQVLIRQGDPALTFMLIESGRVQVSHAVADGPPIVLDIEPGLIIGEIALLRDAPRTATVVAAEPVIGWVGDRDAFDTILHLPGMFDRLVRIARQRLAAFITPIPVQVRTGEWFYLRPVLPGDVERTLNGPVEFSSETLYRRFQSVRKPTRALLEYLFEVDYADHFVWVMTEGALGPVIADARFVREGHNATMAEVAFTVGDDYQGRGIGSFLMGALIVSANYVGVQRFNARVLTDNMAMRKIMDRLGAVWVREDLGVVMTEVDVPPVDTVPFEPELIDQIRDATRKVIRAVSQ.

3',5'-cyclic AMP-binding positions include 85–88 (GEIA), 95–96 (RT), and arginine 135. The N-acetyltransferase domain occupies 153–317 (FYLRPVLPGD…DTVPFEPELI (165 aa)). Mg(2+) is bound at residue glutamate 211. Substrate-binding positions include 237–239 (FTV), 245–250 (GRGIGS), asparagine 276, and arginine 285.

In terms of assembly, homodimer. Mg(2+) serves as cofactor.

With respect to regulation, allosterically regulated by cAMP. Catalyzes specifically the acetylation of the epsilon-amino group of a highly conserved lysine residue in acetyl-CoA synthetase (ACS) and of the universal stress protein (USP) MSMEG_4207. Acetylation results in the inactivation of ACS activity and could be important for mycobacteria to adjust to environmental changes. In Mycolicibacterium smegmatis (strain ATCC 700084 / mc(2)155) (Mycobacterium smegmatis), this protein is Acetyltransferase Pat.